Reading from the N-terminus, the 570-residue chain is Proline--tRNA ligase (570 aa).

The protein belongs to the class-II aminoacyl-tRNA synthetase family. ProS type 1 subfamily. Homodimer.

The protein resides in the cytoplasm. It carries out the reaction tRNA(Pro) + L-proline + ATP = L-prolyl-tRNA(Pro) + AMP + diphosphate. Catalyzes the attachment of proline to tRNA(Pro) in a two-step reaction: proline is first activated by ATP to form Pro-AMP and then transferred to the acceptor end of tRNA(Pro). As ProRS can inadvertently accommodate and process non-cognate amino acids such as alanine and cysteine, to avoid such errors it has two additional distinct editing activities against alanine. One activity is designated as 'pretransfer' editing and involves the tRNA(Pro)-independent hydrolysis of activated Ala-AMP. The other activity is designated 'posttransfer' editing and involves deacylation of mischarged Ala-tRNA(Pro). The misacylated Cys-tRNA(Pro) is not edited by ProRS. In Shewanella sp. (strain ANA-3), this protein is Proline--tRNA ligase.